Reading from the N-terminus, the 191-residue chain is Elongation factor P (191 aa).

The residue at position 34 (Lys34) is an N6-(3,6-diaminohexanoyl)-5-hydroxylysine.

Belongs to the elongation factor P family. Post-translationally, may be beta-lysylated on the epsilon-amino group of Lys-34 by the combined action of EpmA and EpmB, and then hydroxylated on the C5 position of the same residue by EpmC (if this protein is present). Lysylation is critical for the stimulatory effect of EF-P on peptide-bond formation. The lysylation moiety may extend toward the peptidyltransferase center and stabilize the terminal 3-CCA end of the tRNA. Hydroxylation of the C5 position on Lys-34 may allow additional potential stabilizing hydrogen-bond interactions with the P-tRNA.

It is found in the cytoplasm. It participates in protein biosynthesis; polypeptide chain elongation. In terms of biological role, involved in peptide bond synthesis. Alleviates ribosome stalling that occurs when 3 or more consecutive Pro residues or the sequence PPG is present in a protein, possibly by augmenting the peptidyl transferase activity of the ribosome. Modification of Lys-34 is required for alleviation. The chain is Elongation factor P from Marinomonas sp. (strain MWYL1).